An 884-amino-acid chain; its full sequence is Alanine--tRNA ligase (884 aa).

4 residues coordinate Zn(2+): His-565, His-569, Cys-672, and His-676.

The protein belongs to the class-II aminoacyl-tRNA synthetase family. Zn(2+) serves as cofactor.

The protein resides in the cytoplasm. The catalysed reaction is tRNA(Ala) + L-alanine + ATP = L-alanyl-tRNA(Ala) + AMP + diphosphate. Its function is as follows. Catalyzes the attachment of alanine to tRNA(Ala) in a two-step reaction: alanine is first activated by ATP to form Ala-AMP and then transferred to the acceptor end of tRNA(Ala). Also edits incorrectly charged Ser-tRNA(Ala) and Gly-tRNA(Ala) via its editing domain. The polypeptide is Alanine--tRNA ligase (Sphingopyxis alaskensis (strain DSM 13593 / LMG 18877 / RB2256) (Sphingomonas alaskensis)).